Here is a 295-residue protein sequence, read N- to C-terminus: ATP synthase gamma chain (295 aa).

This sequence belongs to the ATPase gamma chain family. As to quaternary structure, F-type ATPases have 2 components, CF(1) - the catalytic core - and CF(0) - the membrane proton channel. CF(1) has five subunits: alpha(3), beta(3), gamma(1), delta(1), epsilon(1). CF(0) has three main subunits: a, b and c.

Its subcellular location is the cell inner membrane. In terms of biological role, produces ATP from ADP in the presence of a proton gradient across the membrane. The gamma chain is believed to be important in regulating ATPase activity and the flow of protons through the CF(0) complex. The chain is ATP synthase gamma chain from Paraburkholderia phymatum (strain DSM 17167 / CIP 108236 / LMG 21445 / STM815) (Burkholderia phymatum).